Consider the following 431-residue polypeptide: Chaperone SurA (431 aa).

The N-terminal stretch at 1–20 (MKLTVVTFALLAFISFNTFA) is a signal peptide. PpiC domains follow at residues 171–272 (QAEY…KIID) and 281–381 (VAEL…QLMD).

It localises to the periplasm. The catalysed reaction is [protein]-peptidylproline (omega=180) = [protein]-peptidylproline (omega=0). Chaperone involved in the correct folding and assembly of outer membrane proteins. Recognizes specific patterns of aromatic residues and the orientation of their side chains, which are found more frequently in integral outer membrane proteins. May act in both early periplasmic and late outer membrane-associated steps of protein maturation. The chain is Chaperone SurA from Pseudoalteromonas atlantica (strain T6c / ATCC BAA-1087).